The following is a 126-amino-acid chain: Large ribosomal subunit protein bL20c (126 aa).

This sequence belongs to the bacterial ribosomal protein bL20 family.

It localises to the plastid. The protein localises to the chloroplast. Its function is as follows. Binds directly to 23S ribosomal RNA and is necessary for the in vitro assembly process of the 50S ribosomal subunit. It is not involved in the protein synthesizing functions of that subunit. The sequence is that of Large ribosomal subunit protein bL20c from Guizotia abyssinica (Niger).